The primary structure comprises 196 residues: dCTP deaminase (196 aa).

DCTP is bound by residues 113–118, D131, 139–141, Y174, K181, and Q185; these read RSSLAR and VLE. The active-site Proton donor/acceptor is E141.

Belongs to the dCTP deaminase family. As to quaternary structure, homotrimer.

It catalyses the reaction dCTP + H2O + H(+) = dUTP + NH4(+). Its pathway is pyrimidine metabolism; dUMP biosynthesis; dUMP from dCTP (dUTP route): step 1/2. Functionally, catalyzes the deamination of dCTP to dUTP. The polypeptide is dCTP deaminase (Wigglesworthia glossinidia brevipalpis).